We begin with the raw amino-acid sequence, 224 residues long: Large ribosomal subunit protein uL4 (224 aa).

The segment at 52 to 109 is disordered; it reads AAARQGTHSTKTRGDVSGGGRKPYRQKGTGRARQGSTRAPQFTGGGVVHGPKPRDYSQ.

Belongs to the universal ribosomal protein uL4 family. In terms of assembly, part of the 50S ribosomal subunit.

Its function is as follows. One of the primary rRNA binding proteins, this protein initially binds near the 5'-end of the 23S rRNA. It is important during the early stages of 50S assembly. It makes multiple contacts with different domains of the 23S rRNA in the assembled 50S subunit and ribosome. Functionally, forms part of the polypeptide exit tunnel. This chain is Large ribosomal subunit protein uL4, found in Mycobacterium marinum (strain ATCC BAA-535 / M).